A 555-amino-acid chain; its full sequence is Formate--tetrahydrofolate ligase (555 aa).

65–72 (TPAGEGKS) is a binding site for ATP.

It belongs to the formate--tetrahydrofolate ligase family.

The catalysed reaction is (6S)-5,6,7,8-tetrahydrofolate + formate + ATP = (6R)-10-formyltetrahydrofolate + ADP + phosphate. The protein operates within one-carbon metabolism; tetrahydrofolate interconversion. The sequence is that of Formate--tetrahydrofolate ligase from Staphylococcus aureus (strain USA300).